The chain runs to 213 residues: MSHSKSSQRWLKEHFSDPFVKKAQAEGMRSRAAYKLEEILKRDRILRPNMVVIDLGAAPGGWSQQIRKQMGDRGRVIALDIVKMAPLVGIEFLQGDFRDKAVLSQLEIMLKGQPVDLVLSDMAPNKSGMDAMDQPRMMYLAELAMDFADIHVKPGGSFLIKLFHGVGSDDYIRQLRHRYKKVAIRKPLASRKRSPEVYILGDGKLTQNEVSCS.

Residues glycine 60, tryptophan 62, aspartate 80, aspartate 96, and aspartate 121 each coordinate S-adenosyl-L-methionine. Residue lysine 161 is the Proton acceptor of the active site.

Belongs to the class I-like SAM-binding methyltransferase superfamily. RNA methyltransferase RlmE family.

It localises to the cytoplasm. It catalyses the reaction uridine(2552) in 23S rRNA + S-adenosyl-L-methionine = 2'-O-methyluridine(2552) in 23S rRNA + S-adenosyl-L-homocysteine + H(+). Functionally, specifically methylates the uridine in position 2552 of 23S rRNA at the 2'-O position of the ribose in the fully assembled 50S ribosomal subunit. This is Ribosomal RNA large subunit methyltransferase E from Xylella fastidiosa (strain 9a5c).